A 534-amino-acid chain; its full sequence is Serine/threonine-protein phosphatase 2B catalytic subunit (534 aa).

Asp-88, His-90, and Asp-116 together coordinate Fe cation. Zn(2+) contacts are provided by Asp-116 and Asn-148. His-149 functions as the Proton donor in the catalytic mechanism. Zn(2+) contacts are provided by His-197 and His-279. 2 disordered regions span residues 375-398 (LEDE…DVES) and 475-534 (PSHE…TREA). 2 stretches are compositionally biased toward basic and acidic residues: residues 475 to 497 (PSHE…RAQQ) and 524 to 534 (QRDAARETREA).

It belongs to the PPP phosphatase family. PP-2B subfamily. Composed of two components (A and B), the A component is the catalytic subunit and the B component confers calcium sensitivity. Fe(3+) serves as cofactor. Requires Zn(2+) as cofactor.

The enzyme catalyses O-phospho-L-seryl-[protein] + H2O = L-seryl-[protein] + phosphate. It catalyses the reaction O-phospho-L-threonyl-[protein] + H2O = L-threonyl-[protein] + phosphate. Its function is as follows. Calcium-dependent, calmodulin-stimulated protein phosphatase. This subunit may have a role in the calmodulin activation of calcineurin. This is Serine/threonine-protein phosphatase 2B catalytic subunit (cnaA) from Aspergillus fumigatus (strain ATCC MYA-4609 / CBS 101355 / FGSC A1100 / Af293) (Neosartorya fumigata).